A 410-amino-acid polypeptide reads, in one-letter code: Arginine deiminase (410 aa).

Cys-400 acts as the Amidino-cysteine intermediate in catalysis.

It belongs to the arginine deiminase family.

It is found in the cytoplasm. The enzyme catalyses L-arginine + H2O = L-citrulline + NH4(+). It functions in the pathway amino-acid degradation; L-arginine degradation via ADI pathway; carbamoyl phosphate from L-arginine: step 1/2. This chain is Arginine deiminase (arcA), found in Borreliella burgdorferi (strain ATCC 35210 / DSM 4680 / CIP 102532 / B31) (Borrelia burgdorferi).